Here is a 128-residue protein sequence, read N- to C-terminus: Iron-sulfur cluster insertion protein ErpA (128 aa).

Residues Cys-56, Cys-120, and Cys-122 each contribute to the iron-sulfur cluster site.

The protein belongs to the HesB/IscA family. In terms of assembly, homodimer. Iron-sulfur cluster serves as cofactor.

Required for insertion of 4Fe-4S clusters for at least IspG. In Xylella fastidiosa (strain M23), this protein is Iron-sulfur cluster insertion protein ErpA.